A 49-amino-acid chain; its full sequence is Large ribosomal subunit protein bL33 (49 aa).

It belongs to the bacterial ribosomal protein bL33 family.

The protein is Large ribosomal subunit protein bL33 of Clostridium acetobutylicum (strain ATCC 824 / DSM 792 / JCM 1419 / IAM 19013 / LMG 5710 / NBRC 13948 / NRRL B-527 / VKM B-1787 / 2291 / W).